The primary structure comprises 471 residues: 5-hydroxytryptamine receptor 2A (471 aa).

Topologically, residues 1 to 80 are extracellular; sequence MDILCEENTS…LQEKNWSALL (80 aa). Residues Asn8, Asn38, Asn44, Asn51, and Asn54 are each glycosylated (N-linked (GlcNAc...) asparagine). Residues 81 to 97 traverse the membrane as a helical segment; that stretch reads TAVVIILTIAGNILVIM. Residues 98-111 are Cytoplasmic-facing; sequence AVSLEKKLQNATNY. The chain crosses the membrane as a helical span at residues 112-137; it reads FLMSLAIADMLLGFLVMPVSMLTILY. At 138–146 the chain is on the extracellular side; it reads GYRWPLPSK. Residues 147 to 171 form a helical membrane-spanning segment; sequence LCAVWIYLDVLFSTASIMHLCAISL. A disulfide bridge connects residues Cys148 and Cys227. Asp155 contributes to the serotonin binding site. A DRY motif; important for ligand-induced conformation changes motif is present at residues 172–174; that stretch reads DRY. At 172-191 the chain is on the cytoplasmic side; it reads DRYVAIQNPIHHSRFNSRTK. Residues 192 to 215 traverse the membrane as a helical segment; sequence AFLKIIAVWTISVGISMPIPVFGL. Residues 216-232 are Extracellular-facing; the sequence is QDDSKVFKEGSCLLADD. A helical membrane pass occupies residues 233-258; it reads NFVLIGSFVSFFIPLTIMVITYFLTI. Topologically, residues 259-322 are cytoplasmic; it reads KSLQKEATLC…QSISNEQKAC (64 aa). At Ser280 the chain carries Phosphoserine. A helical transmembrane segment spans residues 323–348; sequence KVLGIVFFLFVVMWCPFFITNIMAVI. Asn343 provides a ligand contact to serotonin. A disulfide bond links Cys349 and Cys353. Residues 349 to 356 lie on the Extracellular side of the membrane; it reads CKESCNED. A helical transmembrane segment spans residues 357-382; the sequence is VIGALLNVFVWIGYLSSAVNPLVYTL. Positions 376–380 match the NPxxY motif; important for ligand-induced conformation changes and signaling motif; sequence NPLVY. Residues 383–471 are Cytoplasmic-facing; that stretch reads FNKTYRSAFS…DGVNEKVSCV (89 aa). Positions 450-471 are disordered; the sequence is KQHSEDASKDNSDGVNEKVSCV. Basic and acidic residues predominate over residues 451–465; sequence QHSEDASKDNSDGVN. The short motif at 469 to 471 is the PDZ-binding element; sequence SCV.

Belongs to the G-protein coupled receptor 1 family. In terms of assembly, interacts (via C-terminus) with MPDZ and PATJ. May interact (via C-terminus) with MPP3, PRDX6, DLG4, DLG1, CASK, APBA1 and MAGI2. Interacts with GRM2 and DRD2; this may affect signaling.

Its subcellular location is the cell membrane. It localises to the cell projection. The protein resides in the dendrite. The protein localises to the axon. It is found in the cytoplasmic vesicle. Its subcellular location is the membrane. It localises to the caveola. The protein resides in the presynapse. G-protein coupled receptor activity is regulated by lipids: oleamide increases HTR2A-mediated activity. Its function is as follows. G-protein coupled receptor for 5-hydroxytryptamine (serotonin). Also functions as a receptor for various drugs and psychoactive substances, including mescaline, psilocybin, 1-(2,5-dimethoxy-4-iodophenyl)-2-aminopropane (DOI) and lysergic acid diethylamide (LSD). Ligand binding causes a conformation change that triggers signaling via guanine nucleotide-binding proteins (G proteins) and modulates the activity of downstream effectors. HTR2A is coupled to G(q)/G(11) G alpha proteins and activates phospholipase C-beta, releasing diacylglycerol (DAG) and inositol 1,4,5-trisphosphate (IP3) second messengers that modulate the activity of phosphatidylinositol 3-kinase and promote the release of Ca(2+) ions from intracellular stores, respectively. Beta-arrestin family members inhibit signaling via G proteins and mediate activation of alternative signaling pathways. Affects neural activity, perception, cognition and mood. Plays a role in the regulation of behavior, including responses to anxiogenic situations and psychoactive substances. Plays a role in intestinal smooth muscle contraction, and may play a role in arterial vasoconstriction. The protein is 5-hydroxytryptamine receptor 2A (HTR2A) of Macaca mulatta (Rhesus macaque).